The sequence spans 682 residues: Potassium-transporting ATPase ATP-binding subunit (682 aa).

The next 4 membrane-spanning stretches (helical) occupy residues 44–64, 66–86, 233–253, and 257–277; these read VMAVVMGGTLLAAVITASGHG, AGFGWAVTAILFVTVLFGNFA, LTFLIVVASLPAIAGFVGVTL, and LLIALLVCLIPTTIGGLLPAI. D310 serves as the catalytic 4-aspartylphosphate intermediate. ATP contacts are provided by residues D347, E351, 377 to 384, and K395; that span reads FTAQTRMS. Positions 518 and 522 each coordinate Mg(2+). 3 helical membrane passes run 588–608, 616–636, and 658–678; these read FAILPALFAAAIPSMAALNVM, AVLAALIFNALIIPALIPLAL, and GLGGVLLPFAAIKLIDLALVA.

This sequence belongs to the cation transport ATPase (P-type) (TC 3.A.3) family. Type IA subfamily. In terms of assembly, the system is composed of three essential subunits: KdpA, KdpB and KdpC.

The protein localises to the cell inner membrane. It catalyses the reaction K(+)(out) + ATP + H2O = K(+)(in) + ADP + phosphate + H(+). In terms of biological role, part of the high-affinity ATP-driven potassium transport (or Kdp) system, which catalyzes the hydrolysis of ATP coupled with the electrogenic transport of potassium into the cytoplasm. This subunit is responsible for energy coupling to the transport system and for the release of the potassium ions to the cytoplasm. In Xanthomonas campestris pv. campestris (strain ATCC 33913 / DSM 3586 / NCPPB 528 / LMG 568 / P 25), this protein is Potassium-transporting ATPase ATP-binding subunit.